An 87-amino-acid chain; its full sequence is Phytosulfokines 2 (87 aa).

Positions 1–22 (MANVSALLTIALLLCSTLMCTA) are cleaved as a signal peptide. A propeptide spanning residues 23-77 (RPEPAISISITTAADPCNMEKKIEGKLDDMHMVDENCGADDEDCLMRRTLVAHTD) is cleaved from the precursor. Residues Y78 and Y80 each carry the sulfotyrosine modification. Residues 83–87 (KKKHP) constitute a propeptide that is removed on maturation.

Belongs to the phytosulfokine family. In terms of processing, sulfation is important for activity and for the binding to a putative membrane receptor. Post-translationally, PSK-beta is an enzymatic derivative of PSK-alpha. As to expression, expressed in stems, roots and leaves.

Its subcellular location is the secreted. Promotes plant cell differentiation, organogenesis and somatic embryogenesis as well as cell proliferation. The protein is Phytosulfokines 2 (PSK2) of Arabidopsis thaliana (Mouse-ear cress).